Reading from the N-terminus, the 295-residue chain is MYRISQLMSTPVASSSRLEREYAGELSPTCIFPSFTCDSLDGYHSFECGSIDPLTGSHYTCRRSPRLLTNGYYIWTEDSFLCDKDGNITLNPSQTSVMYKENLVRIFRKKKRICHSFSSLFNLSTSKSWLHGSIFGDINSSPSEDNWLKGTRRLDTDHCNGNADDLDCSSLTDDWESGKMNAESVITSSSSHIISQPPGGNSHSLSLQSQLTASERFQENSSDHSETRLLQEVFFQAILLAVCLIISACARWFMGEILASVFTCSLMITVAYVKSLFLSLASYFKTTACARFVKI.

A run of 2 helical transmembrane segments spans residues 229 to 249 (LLQE…ISAC) and 253 to 273 (FMGE…VAYV).

The protein belongs to the TMEM71 family.

Its subcellular location is the membrane. This chain is Transmembrane protein 71 (TMEM71), found in Homo sapiens (Human).